A 614-amino-acid polypeptide reads, in one-letter code: UvrABC system protein C (614 aa).

The GIY-YIG domain occupies 14–91 (TSPGCYIHKD…IKENKPKYNI (78 aa)). Residues 196 to 231 (NKIIDELKGKMAAAAQTMEFERAAEYRDLIQAIGTL) form the UVR domain. The segment at 595 to 614 (LPQVAEERVDYQTEGNHNKP) is disordered.

Belongs to the UvrC family. As to quaternary structure, interacts with UvrB in an incision complex.

The protein localises to the cytoplasm. The UvrABC repair system catalyzes the recognition and processing of DNA lesions. UvrC both incises the 5' and 3' sides of the lesion. The N-terminal half is responsible for the 3' incision and the C-terminal half is responsible for the 5' incision. This Streptococcus pneumoniae (strain Taiwan19F-14) protein is UvrABC system protein C.